The primary structure comprises 1164 residues: Phospholipid-transporting ATPase IA (1164 aa).

At methionine 1–leucine 65 the chain is on the cytoplasmic side. The residue at position 25 (serine 25) is a Phosphoserine. The residue at position 28 (threonine 28) is a Phosphothreonine. The residue at position 29 (serine 29) is a Phosphoserine. Residues proline 66–leucine 86 form a helical membrane-spanning segment. Topologically, residues leucine 87–aspartate 92 are exoplasmic loop. The helical transmembrane segment at valine 93–lysine 115 threads the bilayer. Residues glutamate 116 to glutamine 297 are Cytoplasmic-facing. The helical transmembrane segment at isoleucine 298–tryptophan 319 threads the bilayer. Residues asparagine 320–phenylalanine 344 are Exoplasmic loop-facing. A helical transmembrane segment spans residues leucine 345–valine 366. Over lysine 367 to lysine 857 the chain is Cytoplasmic. The active-site 4-aspartylphosphate intermediate is aspartate 409. ATP contacts are provided by aspartate 409, lysine 410, and threonine 411. Aspartate 409 contributes to the Mg(2+) binding site. Threonine 411 serves as a coordination point for Mg(2+). Serine 443 is subject to Phosphoserine. ATP is bound by residues glutamate 508, phenylalanine 549, lysine 572, arginine 605, threonine 685, glycine 686, aspartate 687, alanine 741–threonine 748, arginine 775, and lysine 781. A Mg(2+)-binding site is contributed by aspartate 801. ATP contacts are provided by asparagine 804 and aspartate 805. Position 805 (aspartate 805) interacts with Mg(2+). Residues cysteine 858–phenylalanine 878 form a helical membrane-spanning segment. Residues valine 879–arginine 890 are Exoplasmic loop-facing. A helical membrane pass occupies residues tryptophan 891–isoleucine 910. Over phenylalanine 911 to valine 940 the chain is Cytoplasmic. The chain crosses the membrane as a helical span at residues phenylalanine 941–alanine 962. The Exoplasmic loop portion of the chain corresponds to leucine 963–aspartate 976. A helical transmembrane segment spans residues tyrosine 977–glutamate 999. Over threonine 1000 to tryptophan 1005 the chain is Cytoplasmic. A helical transmembrane segment spans residues phenylalanine 1006–serine 1026. Residues serine 1027–methionine 1044 are Exoplasmic loop-facing. Residues leucine 1045–lysine 1070 form a helical membrane-spanning segment. Over valine 1071–tryptophan 1164 the chain is Cytoplasmic. Glycine 1095–serine 1102 contacts ATP. A Phosphoserine modification is found at serine 1126.

This sequence belongs to the cation transport ATPase (P-type) (TC 3.A.3) family. Type IV subfamily. As to quaternary structure, component of a P4-ATPase flippase complex which consists of a catalytic alpha subunit and an accessory beta subunit. Interacts with TMEM30A to form a flippase complex; this complex forms an intermediate phosphoenzyme. Interacts with TMEM30B; this interaction is reported conflictingly. Mg(2+) serves as cofactor. In terms of processing, cleaved by calpain in a caspase- and calcium influx-dependent manner during platelet apoptosis leading to a 100 kDa polypeptide. Found in most adult tissues except liver, testis and placenta. Most abundant in heart, brain and skeletal muscle. Also detected in fetal tissues. Isoform 1 is only detected in brain, skeletal muscle and heart and is the most abundant form in skeletal muscle. Highly expressed in platelets.

The protein localises to the cytoplasmic vesicle. The protein resides in the secretory vesicle. It localises to the chromaffin granule membrane. Its subcellular location is the cytoplasmic granule. It is found in the cell membrane. The protein localises to the endoplasmic reticulum. The protein resides in the golgi apparatus. It carries out the reaction ATP + H2O + phospholipidSide 1 = ADP + phosphate + phospholipidSide 2.. It catalyses the reaction a 1,2-diacyl-sn-glycero-3-phospho-L-serine(out) + ATP + H2O = a 1,2-diacyl-sn-glycero-3-phospho-L-serine(in) + ADP + phosphate + H(+). With respect to regulation, ATPase activity is stimulated by phosphatidylserine (PS) and minimally by phosphatidylethanolamine (PE). ATPase activity is inhibited by beryllium fluoride and aluminum trifluoride. Its function is as follows. Catalytic component of a P4-ATPase flippase complex which catalyzes the hydrolysis of ATP coupled to the transport of aminophospholipids from the outer to the inner leaflet of various membranes and ensures the maintenance of asymmetric distribution of phospholipids. Phospholipid translocation also seems to be implicated in vesicle formation and in uptake of lipid signaling molecules. In vitro, its ATPase activity is selectively and stereospecifically stimulated by phosphatidylserine (PS). The flippase complex ATP8A1:TMEM30A seems to play a role in regulation of cell migration probably involving flippase-mediated translocation of phosphatidylethanolamine (PE) at the cell membrane. Acts as aminophospholipid translocase at the cell membrane in neuronal cells. In Homo sapiens (Human), this protein is Phospholipid-transporting ATPase IA.